A 621-amino-acid chain; its full sequence is MEKTKDPADRSSRSERKRRDSFGMFDGYDSCSEDTSSSSSSDESEEEVAPLPSSLPIIKNNGQVYTYPDGKSGMATCEMCGMVGVRDAFYSKTKRFCSVSCSRSYSSNSKKASILARLQGKPPTKKAKVLQKKPLVAKLAAYAQYKATLKNQSVNKAPVTVEGFSWGNYITSNNVIAAPVTCFRHAPMGNCWGDIAEGVRIEVPNTDSNLPTKVFWISGIVKLAGYNALLRYEGFENDSSLDFWCNICGPDIHPVGWCATSGKPLVPPQSIQHKYTNWKAFLVKRLTGAKTLPPDFSQKVSENMQYPFKPSMRVEVVDKTHLCRTRVAVVESVIGGRLRLVYEESEDKTDDFWCHMYSPLIHPIGWSRSIGHRFKRTDILKKQESNYDAPSHLFIKVKDVEQGSEWFKEGMKLEAIDPLNLSAICVATIRKVLAEGYLMIGIDGSEAADGSDWFCYHASSPSIFPVGFCEINKIELTPPRGYTKLPFKWFDYLRETGSIAAPVKLFNKDVPNHGFRVGMKLEAVDLMEPRLVCVATVTRIIHRLLRIHFDGWEDEYDQWVDCESPDLYPVGWCQLTGYQLQPPAPQSNKDGQSNVSKQKKKSKSQPYKGHKKNFRKPGNRP.

Over residues 1-21 (MEKTKDPADRSSRSERKRRDS) the composition is skewed to basic and acidic residues. The segment at 1-55 (MEKTKDPADRSSRSERKRRDSFGMFDGYDSCSEDTSSSSSSDESEEEVAPLPSSL) is disordered. Low complexity predominate over residues 29-41 (DSCSEDTSSSSSS). Residues 68-103 (PDGKSGMATCEMCGMVGVRDAFYSKTKRFCSVSCSR) form an FCS-type zinc finger. Positions 77, 80, 97, and 101 each coordinate Zn(2+). 4 MBT repeats span residues 164–268 (FSWG…LVPP), 276–373 (TNWK…IGHR), 374–479 (FKRT…LTPP), and 487–583 (FKWF…LQPP). Residues 581–621 (QPPAPQSNKDGQSNVSKQKKKSKSQPYKGHKKNFRKPGNRP) are disordered. The segment covering 597–621 (KQKKKSKSQPYKGHKKNFRKPGNRP) has biased composition (basic residues).

Monomer. Component of the NuA4 histone acetyltransferase complex.

It localises to the nucleus. The protein resides in the chromosome. Its function is as follows. Chromatin reader component of the NuA4 histone acetyltransferase complex, a multiprotein complex involved in transcriptional activation of select genes principally by acetylation of nucleosomal histones H4 and H2A. The NuA4 complex plays a direct role in repair of DNA double-strand breaks (DSBs) by promoting homologous recombination (HR). MBTD1 specifically recognizes and binds monomethylated and dimethylated 'Lys-20' on histone H4 (H4K20me1 and H4K20me2, respectively). In the NuA4 complex, MBTD1 promotes recruitment of the complex to H4K20me marks by competing with TP53BP1 for binding to H4K20me. Following recruitment to H4K20me at DNA breaks, the NuA4 complex catalyzes acetylation of 'Lys-15' on histone H2A (H2AK15), blocking the ubiquitination mark required for TP53BP1 localization at DNA breaks, thereby promoting homologous recombination (HR). The protein is MBT domain-containing protein 1 of Xenopus laevis (African clawed frog).